We begin with the raw amino-acid sequence, 208 residues long: LexA repressor (208 aa).

The segment at residues 30–50 is a DNA-binding region (H-T-H motif); sequence VREICAAVKLSSTSTVHGHLA. Residues serine 129 and lysine 167 each act as for autocatalytic cleavage activity in the active site.

The protein belongs to the peptidase S24 family. As to quaternary structure, homodimer.

The catalysed reaction is Hydrolysis of Ala-|-Gly bond in repressor LexA.. Its function is as follows. Represses a number of genes involved in the response to DNA damage (SOS response), including recA and lexA. In the presence of single-stranded DNA, RecA interacts with LexA causing an autocatalytic cleavage which disrupts the DNA-binding part of LexA, leading to derepression of the SOS regulon and eventually DNA repair. This Lactobacillus helveticus (strain DPC 4571) protein is LexA repressor.